We begin with the raw amino-acid sequence, 501 residues long: Dipeptide and tripeptide permease A (501 aa).

Residues 1–21 (MSTANNKPAESVSLNAFKQPR) lie on the Cytoplasmic side of the membrane. Residues 22–44 (AFYLIFSIELWERFGYYGLQGIM) form a helical membrane-spanning segment. At 45–59 (AVYLVKQLGMSEADS) the chain is on the periplasmic side. Residues 60 to 80 (ITLFSSFSALVYGLVAIGGWL) traverse the membrane as a helical segment. The Cytoplasmic segment spans residues 81 to 89 (GDKVLGTKR). A helical membrane pass occupies residues 90–110 (VIMLGAIVLAIGYALVAWSGH). A topological domain (periplasmic) is located at residue aspartate 111. Residues 112–132 (AAIVYMGMATIAVGNGLFKAN) traverse the membrane as a helical segment. The Cytoplasmic segment spans residues 133-153 (PSSLLSTCYDKNDPRLDGAFT). The helical transmembrane segment at 154–174 (MYYMSINIGSFFSMLATPWLA) threads the bilayer. Over 175 to 178 (ARFG) the chain is Periplasmic. A helical transmembrane segment spans residues 179–199 (WSVAFALSVVGMVITIINFAF). Residues 200-218 (CQKWVKQYGSKPDFAPVHM) lie on the Cytoplasmic side of the membrane. Residues 219 to 239 (GKLLATIAGVVVLVAIATWLL) form a helical membrane-spanning segment. The Periplasmic segment spans residues 240 to 246 (HNQGIAR). The chain crosses the membrane as a helical span at residues 247–267 (MVLGVVALGIVVIFAKETIGL). Over 268–274 (KGAARRK) the chain is Cytoplasmic. A helical membrane pass occupies residues 275 to 295 (MIVAFLLMVEAIVFFVLYSQM). The Periplasmic portion of the chain corresponds to 296–320 (PTSLNFFAIRNVEHSILGIAFEPEQ). A helical membrane pass occupies residues 321-341 (YQALNPFWIMIGSPILAAIYN). Residues 342 to 352 (KMGDRLPMPHK) lie on the Cytoplasmic side of the membrane. Residues 353–373 (FAIGMVLCSGAFLVLPLGAKF) form a helical membrane-spanning segment. At 374 to 383 (ASDAGIVSVN) the chain is on the periplasmic side. The chain crosses the membrane as a helical span at residues 384-404 (WLILSYALQSIGELMISGLGL). Residues 405–414 (AMVAQLVPQR) lie on the Cytoplasmic side of the membrane. A helical membrane pass occupies residues 415–435 (LMGFIMGSWFLTTAGAAIIAG). Topologically, residues 436–459 (KIANLMAVPENVTDPLVSLEVYGH) are periplasmic. Residues 460-480 (VFLQIGIVTAVIAALMLLTAP) traverse the membrane as a helical segment. Topologically, residues 481–501 (KLNRMTQDDSADLKARETAAA) are cytoplasmic.

Belongs to the major facilitator superfamily. Proton-dependent oligopeptide transporter (POT/PTR) (TC 2.A.17) family. DtpA subfamily.

The protein localises to the cell inner membrane. Its function is as follows. Proton-dependent permease that transports di- and tripeptides. The sequence is that of Dipeptide and tripeptide permease A from Klebsiella pneumoniae (strain 342).